The primary structure comprises 687 residues: Protein SDA1 homolog (687 aa).

3 positions are modified to phosphoserine: Ser-232, Ser-234, and Ser-236. Residues 254-315 are a coiled coil; the sequence is KKGSKNKKKL…SCKERFEVKM (62 aa). The segment at 484 to 509 is disordered; that stretch reads LEKGENTEDDEDGWESASLSEEEEED. The span at 490–509 shows a compositional bias: acidic residues; the sequence is TEDDEDGWESASLSEEEEED. A Phosphothreonine modification is found at Thr-552. A phosphoserine mark is found at Ser-585, Ser-589, and Ser-595. The tract at residues 604–651 is disordered; sequence KKPKSDKETRLATAMAGRTDRKEFVRKKTKINPFSSSTNKEKKKQKNF.

Belongs to the SDA1 family.

Its subcellular location is the nucleus. It localises to the nucleolus. Required for 60S pre-ribosomal subunits export to the cytoplasm. The chain is Protein SDA1 homolog (Sdad1) from Mus musculus (Mouse).